Consider the following 240-residue polypeptide: ATP-dependent dethiobiotin synthetase BioD (240 aa).

Residue 15-20 (EIGKTF) coordinates ATP. Threonine 19 contributes to the Mg(2+) binding site. Residue lysine 40 is part of the active site. ATP contacts are provided by residues aspartate 57, 118–121 (EGVG), and 178–179 (NR). Positions 57 and 118 each coordinate Mg(2+).

It belongs to the dethiobiotin synthetase family. As to quaternary structure, homodimer. Mg(2+) serves as cofactor.

It is found in the cytoplasm. It catalyses the reaction (7R,8S)-7,8-diammoniononanoate + CO2 + ATP = (4R,5S)-dethiobiotin + ADP + phosphate + 3 H(+). Its pathway is cofactor biosynthesis; biotin biosynthesis; biotin from 7,8-diaminononanoate: step 1/2. In terms of biological role, catalyzes a mechanistically unusual reaction, the ATP-dependent insertion of CO2 between the N7 and N8 nitrogen atoms of 7,8-diaminopelargonic acid (DAPA, also called 7,8-diammoniononanoate) to form a ureido ring. This chain is ATP-dependent dethiobiotin synthetase BioD, found in Burkholderia mallei (strain NCTC 10247).